The chain runs to 183 residues: A-type ATP synthase subunit E (183 aa).

Belongs to the V-ATPase E subunit family. In terms of assembly, has multiple subunits with at least A(3), B(3), C, D, E, F, H, I and proteolipid K(x).

It localises to the cell membrane. Component of the A-type ATP synthase that produces ATP from ADP in the presence of a proton gradient across the membrane. This chain is A-type ATP synthase subunit E, found in Methanosarcina acetivorans (strain ATCC 35395 / DSM 2834 / JCM 12185 / C2A).